The chain runs to 662 residues: DNA ligase (662 aa).

Residues 34–38, 83–84, and glutamate 113 contribute to the NAD(+) site; these read DYEYD and SI. The active-site N6-AMP-lysine intermediate is lysine 115. The NAD(+) site is built by arginine 136, glutamate 172, lysine 286, and lysine 310. Zn(2+)-binding residues include cysteine 404, cysteine 407, cysteine 422, and cysteine 427. One can recognise a BRCT domain in the interval 583-662; it reads KSGSTCFGKA…EAFTNLIHLE (80 aa).

Belongs to the NAD-dependent DNA ligase family. LigA subfamily. Mg(2+) is required as a cofactor. Mn(2+) serves as cofactor.

The catalysed reaction is NAD(+) + (deoxyribonucleotide)n-3'-hydroxyl + 5'-phospho-(deoxyribonucleotide)m = (deoxyribonucleotide)n+m + AMP + beta-nicotinamide D-nucleotide.. DNA ligase that catalyzes the formation of phosphodiester linkages between 5'-phosphoryl and 3'-hydroxyl groups in double-stranded DNA using NAD as a coenzyme and as the energy source for the reaction. It is essential for DNA replication and repair of damaged DNA. This is DNA ligase from Chlamydia pneumoniae (Chlamydophila pneumoniae).